The primary structure comprises 456 residues: Histidine--tRNA ligase (456 aa).

Positions 1 to 20 (MTQSENVAAAGGAKTEPKVR) are disordered.

This sequence belongs to the class-II aminoacyl-tRNA synthetase family. Homodimer.

It localises to the cytoplasm. The enzyme catalyses tRNA(His) + L-histidine + ATP = L-histidyl-tRNA(His) + AMP + diphosphate + H(+). This Cupriavidus necator (strain ATCC 17699 / DSM 428 / KCTC 22496 / NCIMB 10442 / H16 / Stanier 337) (Ralstonia eutropha) protein is Histidine--tRNA ligase.